The primary structure comprises 131 residues: Sulfurtransferase TusD (131 aa).

Cysteine 81 functions as the Cysteine persulfide intermediate in the catalytic mechanism.

It belongs to the DsrE/TusD family. Heterohexamer, formed by a dimer of trimers. The hexameric TusBCD complex contains 2 copies each of TusB, TusC and TusD. The TusBCD complex interacts with TusE.

It is found in the cytoplasm. In terms of biological role, part of a sulfur-relay system required for 2-thiolation of 5-methylaminomethyl-2-thiouridine (mnm(5)s(2)U) at tRNA wobble positions. Accepts sulfur from TusA and transfers it in turn to TusE. The protein is Sulfurtransferase TusD of Photorhabdus laumondii subsp. laumondii (strain DSM 15139 / CIP 105565 / TT01) (Photorhabdus luminescens subsp. laumondii).